The sequence spans 58 residues: UPF0434 protein Sfri_2386 (58 aa).

It belongs to the UPF0434 family.

The sequence is that of UPF0434 protein Sfri_2386 from Shewanella frigidimarina (strain NCIMB 400).